Here is a 320-residue protein sequence, read N- to C-terminus: tRNA U34 carboxymethyltransferase (320 aa).

Carboxy-S-adenosyl-L-methionine is bound by residues Lys-89, Trp-103, Lys-108, Gly-128, 150-152, 179-180, Met-194, Tyr-198, and Arg-313; these read DPT and LE.

It belongs to the class I-like SAM-binding methyltransferase superfamily. CmoB family. In terms of assembly, homotetramer.

It catalyses the reaction carboxy-S-adenosyl-L-methionine + 5-hydroxyuridine(34) in tRNA = 5-carboxymethoxyuridine(34) in tRNA + S-adenosyl-L-homocysteine + H(+). Functionally, catalyzes carboxymethyl transfer from carboxy-S-adenosyl-L-methionine (Cx-SAM) to 5-hydroxyuridine (ho5U) to form 5-carboxymethoxyuridine (cmo5U) at position 34 in tRNAs. The polypeptide is tRNA U34 carboxymethyltransferase (Haemophilus ducreyi (strain 35000HP / ATCC 700724)).